A 123-amino-acid polypeptide reads, in one-letter code: Aberrant microtubules protein 1 (123 aa).

Required for normal microtubule organization. The sequence is that of Aberrant microtubules protein 1 (ABM1) from Saccharomyces cerevisiae (strain ATCC 204508 / S288c) (Baker's yeast).